The chain runs to 849 residues: Mechanosensitive ion channel protein 7 (849 aa).

Residues 1–49 (MEFRKPFKSHSSYKQIISTGDQNEKTKKKKKLANLDDGDIAKTQSSGSS) form a disordered region. The segment covering 9–21 (SHSSYKQIISTGD) has biased composition (polar residues). The next 6 membrane-spanning stretches (helical) occupy residues 231 to 251 (AITL…VLSL), 274 to 294 (LVLI…VFFI), 313 to 333 (TAVQ…FLFD), 344 to 364 (VLLL…LWLI), 606 to 626 (MISF…LEIA), and 642 to 662 (AFMF…LFII).

It belongs to the MscS (TC 1.A.23) family.

It localises to the membrane. Mechanosensitive channel that opens in response to stretch forces in the membrane lipid bilayer. The protein is Mechanosensitive ion channel protein 7 (MSL7) of Arabidopsis thaliana (Mouse-ear cress).